Consider the following 314-residue polypeptide: uncharacterized protein (314 aa).

It belongs to the carbohydrate kinase PfkB family.

This is an uncharacterized protein from Buchnera aphidicola subsp. Schizaphis graminum (strain Sg).